The chain runs to 428 residues: MTEVQSITTSGEIKMPLSPSSSSSSISSSTTNNTNIKSIPILSQCYSFSGKGNGKELQDKIFRQNSRHSNGGWKFVDDIELKKQRGVCWSLVKSVGNSIIEGKELTSTCLPIELFEARSFLEKVTDTMAFGPLYLKAAAETNDPIERMKMVASFVVSGLHLTTTIAKPFNPLLGETFECDLADGSSAFCEQISHHPPISSWKLLEKDGKYKYTGHFIWSAGCRGNVVKGCLKGPHNIEFADGTNIAFTYPDVLIKGIFWGDRVTEFCGKMLFTDEKNDLACELIFNPNALGFVKSFFSKQKTPCDTIDGRIFRINNNKIKDGNCDKINPDDVLCKMEGTWLTSFLIDQVEYWNIRMIPHGVIYRDPETTLPTDSGRRDDIKHLKMGNLEEAKKYKALIEDNQRKQKKEKDEKLKKDEKLKKEDKKNQK.

A compositionally biased stretch (polar residues) spans 1–11 (MTEVQSITTSG). Disordered stretches follow at residues 1-32 (MTEV…STTN) and 396-428 (ALIE…KNQK). Over residues 18 to 32 (SPSSSSSSISSSTTN) the composition is skewed to low complexity. Residues 389–422 (EEAKKYKALIEDNQRKQKKEKDEKLKKDEKLKKE) are a coiled coil.

This sequence belongs to the OSBP family.

In Dictyostelium discoideum (Social amoeba), this protein is Oxysterol-binding protein 9 (osbI).